A 528-amino-acid chain; its full sequence is Linear primary-alkylsulfatase (528 aa).

Positions 42, 44, 46, 47, 151, and 170 each coordinate Zn(2+). Sulfate is bound by residues 179–184 (NVHTLR) and R189. H213 contacts Zn(2+). Y275 contributes to the sulfate binding site.

This sequence belongs to the metallo-beta-lactamase superfamily. Type III sulfatase family. The cofactor is Zn(2+).

It carries out the reaction a primary linear alkyl sulfate ester + H2O = a primary alcohol + sulfate + H(+). Alkylsulfatase that cleaves the widely used detergent sodium dodecyl sulfate (SDS), which allows the bacterium to use SDS as a sole carbon or sulfur source. This Pseudomonas sp. (strain ATCC 19151) protein is Linear primary-alkylsulfatase.